Here is a 270-residue protein sequence, read N- to C-terminus: Photosystem I chlorophyll a/b-binding protein 6, chloroplastic (270 aa).

Residues 1-33 constitute a chloroplast transit peptide; it reads MAFAIASALTSTLTLSTSRVQNPTQRRPHVAST. A disordered region spans residues 16–36; sequence STSRVQNPTQRRPHVASTSST. A compositionally biased stretch (polar residues) spans 19–36; sequence RVQNPTQRRPHVASTSST. W68 serves as a coordination point for chlorophyll b. Chlorophyll a-binding residues include F88 and E107. Chlorophyll b is bound at residue R112. The helical transmembrane segment at 146 to 164 threads the bilayer; the sequence is YFADSTTLFVAQMVLMGWA. Chlorophyll b is bound by residues E165 and R168. 6 residues coordinate chlorophyll a: K221, E222, N225, R227, Q239, and H254. Residues 228–244 traverse the membrane as a helical segment; it reads LAMLAFLGFCFQATYTS.

This sequence belongs to the light-harvesting chlorophyll a/b-binding (LHC) protein family. In terms of assembly, the LHC complex consists of chlorophyll a-b binding proteins. Homodimer. Binds pigments. Element of the NAD(P)H dehydrogenase-photosystem I supercomplex (NDH-PSI). The cofactor is Binds at least 14 chlorophylls (8 Chl-a and 6 Chl-b) and carotenoids such as lutein and neoxanthin.. Post-translationally, photoregulated by reversible phosphorylation of its threonine residues.

It is found in the plastid. Its subcellular location is the chloroplast thylakoid membrane. Functionally, the light-harvesting complex (LHC) functions as a light receptor, it captures and delivers excitation energy to photosystems with which it is closely associated. Seems involved in the function of the photosystem I in low light conditions, when other LHCA proteins are less abundant. Required, together with LHCA5, for the formation of a full-size NAD(P)H dehydrogenase-photosystem I supercomplex (NDH-PSI) that triggers cyclic and chlororespiratory electron transport in chloroplast thylakoids, especially under stress conditions (e.g. increased light intensity). This Arabidopsis thaliana (Mouse-ear cress) protein is Photosystem I chlorophyll a/b-binding protein 6, chloroplastic.